The chain runs to 403 residues: Serine/threonine transporter SstT (403 aa).

Helical transmembrane passes span 11-31 (GNLV…AFIS), 51-71 (AIAP…KEVG), 81-101 (VMYV…SFIF), 138-158 (ALAN…GIPL), 175-195 (AVSY…FGLV), 213-233 (LLGV…PILV), 285-305 (VAIP…VTVL), and 319-339 (FMTA…ASGV).

It belongs to the dicarboxylate/amino acid:cation symporter (DAACS) (TC 2.A.23) family.

The protein resides in the cell inner membrane. It carries out the reaction L-serine(in) + Na(+)(in) = L-serine(out) + Na(+)(out). The enzyme catalyses L-threonine(in) + Na(+)(in) = L-threonine(out) + Na(+)(out). In terms of biological role, involved in the import of serine and threonine into the cell, with the concomitant import of sodium (symport system). The protein is Serine/threonine transporter SstT of Haemophilus ducreyi (strain 35000HP / ATCC 700724).